A 348-amino-acid chain; its full sequence is MNRTDELRTARIDSLVTPTELAQRYPVSSSVASHVTDSRRRIEKILNGEDPRLLVVIGPCSIHDLNAAMEYATQLQAQRQKHQARLEIVMRTYFEKPRTVVGWKGLISDPDLNGSYRVNHGLELARRLLLQVNELGVPTATEFLDMVTGQFIADLISWGTIGARTTESQIHREMASALSCPVGFKNGTDGNTRIAVDAIRASRASHMFLSPDKDGQMTIYQTSGNPYGHIIMRGGKKPNYHAEDIAAACDTLHEFDLPEHLVVDFSHGNCQKQHRRQLDVCDDICQQIRNGSTAIAGIMAESFLREGTQKIISGQPLIYGQSITDPCLNWEDTEVLLEKLAAAVDSRF.

Belongs to the class-I DAHP synthase family.

It carries out the reaction D-erythrose 4-phosphate + phosphoenolpyruvate + H2O = 7-phospho-2-dehydro-3-deoxy-D-arabino-heptonate + phosphate. It functions in the pathway metabolic intermediate biosynthesis; chorismate biosynthesis; chorismate from D-erythrose 4-phosphate and phosphoenolpyruvate: step 1/7. Its function is as follows. Stereospecific condensation of phosphoenolpyruvate (PEP) and D-erythrose-4-phosphate (E4P) giving rise to 3-deoxy-D-arabino-heptulosonate-7-phosphate (DAHP). The chain is Phospho-2-dehydro-3-deoxyheptonate aldolase, Trp-sensitive (aroH) from Salmonella typhi.